A 290-amino-acid chain; its full sequence is 4-hydroxy-tetrahydrodipicolinate synthase (290 aa).

Position 44 (Thr-44) interacts with pyruvate. Catalysis depends on Tyr-132, which acts as the Proton donor/acceptor. Lys-160 (schiff-base intermediate with substrate) is an active-site residue. Ile-202 serves as a coordination point for pyruvate.

This sequence belongs to the DapA family. In terms of assembly, homotetramer; dimer of dimers.

Its subcellular location is the cytoplasm. The enzyme catalyses L-aspartate 4-semialdehyde + pyruvate = (2S,4S)-4-hydroxy-2,3,4,5-tetrahydrodipicolinate + H2O + H(+). It participates in amino-acid biosynthesis; L-lysine biosynthesis via DAP pathway; (S)-tetrahydrodipicolinate from L-aspartate: step 3/4. Functionally, catalyzes the condensation of (S)-aspartate-beta-semialdehyde [(S)-ASA] and pyruvate to 4-hydroxy-tetrahydrodipicolinate (HTPA). The chain is 4-hydroxy-tetrahydrodipicolinate synthase from Geobacter metallireducens (strain ATCC 53774 / DSM 7210 / GS-15).